The chain runs to 241 residues: Prolactin-8A8 (241 aa).

A signal peptide spans 1–30; the sequence is MELQFRQPHFSDALLLLLLSNLLLWEKASS. 3 cysteine pairs are disulfide-bonded: Cys34-Cys41, Cys101-Cys217, and Cys234-Cys241. N-linked (GlcNAc...) asparagine glycosylation occurs at Asn213.

It belongs to the somatotropin/prolactin family. In terms of tissue distribution, expressed specifically in the placenta. Predominantly expressed in spongiotrophoblast cells.

The protein localises to the secreted. In Mus musculus (Mouse), this protein is Prolactin-8A8 (Prl8a8).